We begin with the raw amino-acid sequence, 496 residues long: Rhamnulokinase (496 aa).

Position 13-17 (13-17 (ASSGR)) interacts with ATP. Residues G83 and 236-238 (HDT) contribute to the substrate site. D237 functions as the Proton acceptor in the catalytic mechanism. T259 is an ATP binding site. N296 serves as a coordination point for substrate. Q304 serves as a coordination point for ATP. Residues C353 and C370 are joined by a disulfide bond. ATP is bound at residue G402. An intrachain disulfide couples C413 to C417.

It belongs to the rhamnulokinase family. Requires Mg(2+) as cofactor.

The catalysed reaction is L-rhamnulose + ATP = L-rhamnulose 1-phosphate + ADP + H(+). The protein operates within carbohydrate degradation; L-rhamnose degradation; glycerone phosphate from L-rhamnose: step 2/3. Involved in the catabolism of L-rhamnose (6-deoxy-L-mannose). Catalyzes the transfer of the gamma-phosphate group from ATP to the 1-hydroxyl group of L-rhamnulose to yield L-rhamnulose 1-phosphate. This Pectobacterium carotovorum subsp. carotovorum (strain PC1) protein is Rhamnulokinase.